The chain runs to 461 residues: Cysteine--tRNA ligase (461 aa).

Residue Cys28 participates in Zn(2+) binding. The short motif at 30–40 (ITIYDLCHIGH) is the 'HIGH' region element. Residues Cys209, His234, and Glu238 each coordinate Zn(2+). The 'KMSKS' region motif lies at 266 to 270 (KMSKS). Lys269 serves as a coordination point for ATP.

It belongs to the class-I aminoacyl-tRNA synthetase family. Monomer. The cofactor is Zn(2+).

It is found in the cytoplasm. The enzyme catalyses tRNA(Cys) + L-cysteine + ATP = L-cysteinyl-tRNA(Cys) + AMP + diphosphate. This chain is Cysteine--tRNA ligase, found in Yersinia pseudotuberculosis serotype O:3 (strain YPIII).